Here is a 1060-residue protein sequence, read N- to C-terminus: Beta-galactosidase (1060 aa).

The substrate site is built by Asn-110 and Asp-209. Position 209 (Asp-209) interacts with Na(+). Mg(2+) is bound by residues Glu-432, His-434, and Glu-477. Substrate-binding positions include Glu-477 and 553–556; that span reads EYAH. The active-site Proton donor is Glu-477. Glu-553 (nucleophile) is an active-site residue. Residue Asn-613 coordinates Mg(2+). Na(+) contacts are provided by Phe-617 and Asn-620. Substrate is bound by residues Asn-620 and Trp-1035.

The protein belongs to the glycosyl hydrolase 2 family. In terms of assembly, homotetramer. Mg(2+) is required as a cofactor. Requires Na(+) as cofactor.

It carries out the reaction Hydrolysis of terminal non-reducing beta-D-galactose residues in beta-D-galactosides.. This Yersinia pestis bv. Antiqua (strain Antiqua) protein is Beta-galactosidase.